We begin with the raw amino-acid sequence, 564 residues long: NAC domain-containing protein 16 (564 aa).

The NAC domain occupies 16-166; sequence SAPGFRFHPT…YYALYKLYKK (151 aa). A DNA-binding region spans residues 115 to 172; that stretch reads VGLKKTLVFYRGRAPNGERTDWVMHEYTMDEEELGRCKNAKEYYALYKLYKKSGAGPK. Residues 535 to 555 traverse the membrane as a helical segment; sequence FLLLSIMGALCAIFWVFKATV.

Expressed in roots, rosette leaves, shoot apex, stems and flowers.

It is found in the membrane. Its subcellular location is the nucleus. Functionally, transcriptional activator activated by proteolytic cleavage through regulated intramembrane proteolysis (RIP). Transcriptional activator that promotes leaf senescence by up-regulating senescence-associated genes in response to developmental and stress-induced senescence signals. Functions in salt and oxidative stress-responsive signaling pathways. Binds to the promoter of NAC029/NAP and NAC059/ORS1 genes. This Arabidopsis thaliana (Mouse-ear cress) protein is NAC domain-containing protein 16.